The sequence spans 155 residues: Ribonuclease H (155 aa).

Positions 5–146 (LAEVVEIFTD…ADMLANRGVQ (142 aa)) constitute an RNase H type-1 domain. Residues D14, E52, D74, and D138 each contribute to the Mg(2+) site.

The protein belongs to the RNase H family. Monomer. Mg(2+) is required as a cofactor.

It localises to the cytoplasm. It carries out the reaction Endonucleolytic cleavage to 5'-phosphomonoester.. Its function is as follows. Endonuclease that specifically degrades the RNA of RNA-DNA hybrids. The polypeptide is Ribonuclease H (Nitrosospira multiformis (strain ATCC 25196 / NCIMB 11849 / C 71)).